The chain runs to 328 residues: MKLRSVTYALFIAGLAAFSTSSLAAQSLRFGYETSQTDSQHIAAKKFNDLLQERTKGELKLKLFPDSTLGNAQAMISGVRGGTIDMEMSGSNNFAGLSPVMNLLDVPFLFRDTAHAHKTLDGKVGDDLKASLEGKGLKVLAYWENGWRDVTNSRAPVKTPADLKGLKIRTNNSPMNIAAFKVFGANPIPMPFAEVYTGLETRTIDAQEHPINVVWSAKFFEVQKFLSLTHHAYSPLLVVINKAKFDGLSPEFQQALVSSAQEAGNYQRKLVAEDQQKIIDGMKEAGVEVITDLDRKAFSDALGNQVRDMFVKDVPQGADLLKAVDEVQ.

The N-terminal stretch at 1 to 24 (MKLRSVTYALFIAGLAAFSTSSLA) is a signal peptide.

In terms of assembly, the complex comprises the extracytoplasmic solute receptor protein YiaO, and the two transmembrane proteins YiaM and YiaN.

It localises to the periplasm. Part of the tripartite ATP-independent periplasmic (TRAP) transport system YiaMNO involved in the uptake of 2,3-diketo-L-gulonate. This protein specifically binds 2,3-diketo-L-gulonate. Is not able to bind either L-ascorbate or dehydroascorbate. The sequence is that of 2,3-diketo-L-gulonate-binding periplasmic protein YiaO (yiaO) from Escherichia coli (strain K12).